The sequence spans 619 residues: MAHVKRYRRSSKSSEEGDLDNEDYVPYVPVKERKKQHMIKLGRIVQLVSETAQPKSSSENENEDDSQGAHDVETWGRKYNISLLDQHTELKKIAEAKKLSAVEKQLREEEKIMESIAQQKALMGVAELAKGIQYEQPIKTAWKPPRYIREMSEEEREAVRHELRILVEGETPSPPIRSFREMKFPKGILNGLAAKGIKNPTPIQVQGLPTVLAGRDLIGIAFTGSGKTLVFVLPVIMFALEQEYSLPFERNEGPYGLIICPSRELAKQTHEIIQHYSKHLQACGMPEIRSCLAMGGLPVSEALDVISRGVHIVVATPGRLMDMLDKKILTLDMCRYLCMDEADRMIDMGFEEDVRTIFSFFKGQRQTLLFSATMPKKIQNFARSALVKPVTINVGRAGAASMNVTQQVEYVKQEAKVVYLLDCLQKTAPPVLIFAEKKQDVDCIHEYLLLKGVEAVAIHGGKDQEERSRAVDAYRVGKKDVLVATDVASKGLDFPNVQHVINYDMPDDIENYVHRIGRTGRSNTKGLATTLINKTTEQSVLLDLKHLLIEGKQEVPDFLDELAPETEHQHLDLGDSHGCTYCGGLGHRITECPKLEAVQNKQASNIGRRDYLSNTAADY.

Residues 1-11 are compositionally biased toward basic residues; it reads MAHVKRYRRSS. Disordered regions lie at residues 1-25 and 50-69; these read MAHVKRYRRSSKSSEEGDLDNEDYV and ETAQPKSSSENENEDDSQGA. Ser-11, Ser-13, Ser-14, Ser-56, Ser-57, Ser-58, and Ser-66 each carry phosphoserine. The Q motif signature appears at 177-205; sequence RSFREMKFPKGILNGLAAKGIKNPTPIQV. In terms of domain architecture, Helicase ATP-binding spans 208 to 392; that stretch reads LPTVLAGRDL…RSALVKPVTI (185 aa). Residue 221-228 participates in ATP binding; it reads AFTGSGKT. The short motif at 340–343 is the DEAD box element; sequence DEAD. The region spanning 403 to 563 is the Helicase C-terminal domain; it reads NVTQQVEYVK…EVPDFLDELA (161 aa). Residues 577–594 form a CCHC-type zinc finger; that stretch reads HGCTYCGGLGHRITECPK.

Belongs to the DEAD box helicase family. DDX41 subfamily.

The protein localises to the nucleus. It carries out the reaction ATP + H2O = ADP + phosphate + H(+). Its function is as follows. ATP-dependent RNA helicase. Is essential for the directed and fasciculated early outgrowth of the bolwig nerves, as well as for its navigation at later stages. Is required during post-transcriptional gene expression. Plays a role during morphogenetic process, apoptosis and the establishment of cell polarity. The chain is ATP-dependent RNA helicase abstrakt (abs) from Drosophila melanogaster (Fruit fly).